The chain runs to 109 residues: Cytochrome c oxidase subunit 6A1, mitochondrial (109 aa).

The transit peptide at 1–24 (MAAAAGSRVFGLLGRSRLQLSRCM) directs the protein to the mitochondrion. The Mitochondrial matrix segment spans residues 25-34 (SSGAHGEEGS). A helical membrane pass occupies residues 35–59 (ARMWKALTYFVALPGVGVSMLNVFL). Residues 60–109 (KSHHGEEERPEFVAYPHLRIRSKPFPWGDGNHTLFHNPHVNPLPTGYEDE) lie on the Mitochondrial intermembrane side of the membrane.

Belongs to the cytochrome c oxidase subunit 6A family. Component of the cytochrome c oxidase (complex IV, CIV), a multisubunit enzyme composed of 14 subunits. The complex is composed of a catalytic core of 3 subunits MT-CO1, MT-CO2 and MT-CO3, encoded in the mitochondrial DNA, and 11 supernumerary subunits COX4I1 (or COX4I2), COX5A, COX5B, COX6A2 (or COX6A1), COX6B1 (or COX6B2), COX6C, COX7A1 (or COX7A2), COX7B, COX7C, COX8B and NDUFA4, which are encoded in the nuclear genome. The complex exists as a monomer or a dimer and forms supercomplexes (SCs) in the inner mitochondrial membrane with NADH-ubiquinone oxidoreductase (complex I, CI) and ubiquinol-cytochrome c oxidoreductase (cytochrome b-c1 complex, complex III, CIII), resulting in different assemblies (supercomplex SCI(1)III(2)IV(1) and megacomplex MCI(2)III(2)IV(2)).

The protein resides in the mitochondrion inner membrane. Its pathway is energy metabolism; oxidative phosphorylation. Component of the cytochrome c oxidase, the last enzyme in the mitochondrial electron transport chain which drives oxidative phosphorylation. The respiratory chain contains 3 multisubunit complexes succinate dehydrogenase (complex II, CII), ubiquinol-cytochrome c oxidoreductase (cytochrome b-c1 complex, complex III, CIII) and cytochrome c oxidase (complex IV, CIV), that cooperate to transfer electrons derived from NADH and succinate to molecular oxygen, creating an electrochemical gradient over the inner membrane that drives transmembrane transport and the ATP synthase. Cytochrome c oxidase is the component of the respiratory chain that catalyzes the reduction of oxygen to water. Electrons originating from reduced cytochrome c in the intermembrane space (IMS) are transferred via the dinuclear copper A center (CU(A)) of subunit 2 and heme A of subunit 1 to the active site in subunit 1, a binuclear center (BNC) formed by heme A3 and copper B (CU(B)). The BNC reduces molecular oxygen to 2 water molecules unsing 4 electrons from cytochrome c in the IMS and 4 protons from the mitochondrial matrix. This Bos taurus (Bovine) protein is Cytochrome c oxidase subunit 6A1, mitochondrial (COX6A1).